Consider the following 406-residue polypeptide: 3-oxoacyl-[acyl-carrier-protein] synthase 1 (406 aa).

Residues 1 to 405 (MRRVVITGIG…GTNVSLIVKK (405 aa)) enclose the Ketosynthase family 3 (KS3) domain. Active-site for beta-ketoacyl synthase activity residues include C164, H299, and H335.

This sequence belongs to the thiolase-like superfamily. Beta-ketoacyl-ACP synthases family. As to quaternary structure, homodimer.

The protein resides in the cytoplasm. The catalysed reaction is a fatty acyl-[ACP] + malonyl-[ACP] + H(+) = a 3-oxoacyl-[ACP] + holo-[ACP] + CO2. It catalyses the reaction (3Z)-decenoyl-[ACP] + malonyl-[ACP] + H(+) = 3-oxo-(5Z)-dodecenoyl-[ACP] + holo-[ACP] + CO2. It participates in lipid metabolism; fatty acid biosynthesis. Functionally, involved in the type II fatty acid elongation cycle. Catalyzes the elongation of a wide range of acyl-ACP by the addition of two carbons from malonyl-ACP to an acyl acceptor. Can also use unsaturated fatty acids. Catalyzes a key reaction in unsaturated fatty acid (UFA) synthesis, the elongation of the cis-3-decenoyl-ACP produced by FabA. The chain is 3-oxoacyl-[acyl-carrier-protein] synthase 1 (fabB) from Buchnera aphidicola subsp. Acyrthosiphon pisum (strain APS) (Acyrthosiphon pisum symbiotic bacterium).